The sequence spans 540 residues: Phosphomethylpyrimidine synthase (540 aa).

Substrate is bound by residues asparagine 143, methionine 172, tyrosine 201, histidine 237, 257-259, 298-301, and glutamate 337; these read SRG and DGLR. Histidine 341 contacts Zn(2+). Position 364 (tyrosine 364) interacts with substrate. Histidine 405 lines the Zn(2+) pocket. [4Fe-4S] cluster contacts are provided by cysteine 485, cysteine 488, and cysteine 493.

This sequence belongs to the ThiC family. [4Fe-4S] cluster is required as a cofactor.

The enzyme catalyses 5-amino-1-(5-phospho-beta-D-ribosyl)imidazole + S-adenosyl-L-methionine = 4-amino-2-methyl-5-(phosphooxymethyl)pyrimidine + CO + 5'-deoxyadenosine + formate + L-methionine + 3 H(+). The protein operates within cofactor biosynthesis; thiamine diphosphate biosynthesis. In terms of biological role, catalyzes the synthesis of the hydroxymethylpyrimidine phosphate (HMP-P) moiety of thiamine from aminoimidazole ribotide (AIR) in a radical S-adenosyl-L-methionine (SAM)-dependent reaction. In Mycobacterium avium (strain 104), this protein is Phosphomethylpyrimidine synthase.